Reading from the N-terminus, the 1375-residue chain is DNA-directed RNA polymerase subunit beta' (1375 aa).

The interval 1–158 (MAKNEVLSLP…RVNKIIQPIR (158 aa)) is unknown. A DNA-directed RNA polymerase subunit beta' region spans residues 159–1353 (KTYGSKAFTH…GGLIPAGTGI (1195 aa)). 4 residues coordinate Zn(2+): Cys-219, Cys-221, Cys-233, and Cys-236. Positions 607, 609, and 611 each coordinate Mg(2+).

The protein belongs to the RNA polymerase beta' chain family. As to quaternary structure, the RNAP catalytic core consists of 2 alpha, 1 beta, 1 beta' and 1 omega subunit. When a sigma factor is associated with the core the holoenzyme is formed, which can initiate transcription. Mg(2+) serves as cofactor. The cofactor is Zn(2+).

It carries out the reaction RNA(n) + a ribonucleoside 5'-triphosphate = RNA(n+1) + diphosphate. In terms of biological role, DNA-dependent RNA polymerase catalyzes the transcription of DNA into RNA using the four ribonucleoside triphosphates as substrates. The polypeptide is DNA-directed RNA polymerase subunit beta' (Acholeplasma laidlawii (strain PG-8A)).